Reading from the N-terminus, the 706-residue chain is Termination factor NPH-I homolog (706 aa).

Positions I62 to R227 constitute a Helicase ATP-binding domain. H75–T82 provides a ligand contact to ATP. A DEAH box motif is present at residues D168–H171. One can recognise a Helicase C-terminal domain in the interval Q417–L599.

Belongs to the DEAD box helicase family. DEAH subfamily. In terms of assembly, part of the viral DNA-directed RNA polymerase that consists of 8 polII-like subunits (RPB1, RPB2, RPB3, RPB5, RPB6, RPB7, RPB9, RPB10), a capping enzyme and a termination factor.

It is found in the virion. Putative DNA-dependent ATPase required for providing the needed energy to achieve the termination of early transcripts. In Ornithodoros (relapsing fever ticks), this protein is Termination factor NPH-I homolog.